Consider the following 372-residue polypeptide: Cobalt-precorrin-5B C(1)-methyltransferase (372 aa).

Belongs to the CbiD family.

The enzyme catalyses Co-precorrin-5B + S-adenosyl-L-methionine = Co-precorrin-6A + S-adenosyl-L-homocysteine. It participates in cofactor biosynthesis; adenosylcobalamin biosynthesis; cob(II)yrinate a,c-diamide from sirohydrochlorin (anaerobic route): step 6/10. In terms of biological role, catalyzes the methylation of C-1 in cobalt-precorrin-5B to form cobalt-precorrin-6A. In Prochlorococcus marinus subsp. pastoris (strain CCMP1986 / NIES-2087 / MED4), this protein is Cobalt-precorrin-5B C(1)-methyltransferase.